The following is a 266-amino-acid chain: Ras-like protein family member 12 (266 aa).

GTP-binding positions include 27 to 34, 74 to 78, and 134 to 137; these read GRRGAGKS, DTADL, and NKLD.

This sequence belongs to the small GTPase superfamily. Ras family.

It catalyses the reaction GTP + H2O = GDP + phosphate + H(+). The protein is Ras-like protein family member 12 (RASL12) of Bos taurus (Bovine).